The following is a 316-amino-acid chain: BTB/POZ domain-containing adapter for CUL3-mediated RhoA degradation protein 2 (316 aa).

The BTB domain occupies lysine 28–glutamine 96. Over residues glutamate 268–proline 279 the composition is skewed to polar residues. The disordered stretch occupies residues glutamate 268–glutamate 287. Position 278 is a phosphoserine (serine 278). At serine 280 the chain carries Phosphoserine; by CK2.

It belongs to the BACURD family. In terms of assembly, component of the BCR(TNFAIP1) E3 ubiquitin ligase complex, at least composed of CUL3, TNFAIP1/BACURD2 and RBX1. Interacts with RHOA; with a preference for RhoA-GDP. Interacts with RHOB. Interacts with PCNA. Interacts with CSNK2B. Post-translationally, phosphorylation at Ser-280 by CK2 facilitates the nucleus localization and increases interaction with PCNA.

It is found in the cytoplasm. It localises to the nucleus. Its subcellular location is the endosome. It functions in the pathway protein modification; protein ubiquitination. In terms of biological role, substrate-specific adapter of a BCR (BTB-CUL3-RBX1) E3 ubiquitin-protein ligase complex involved in regulation of cytoskeleton structure. The BCR(TNFAIP1) E3 ubiquitin ligase complex mediates the ubiquitination of RHOA, leading to its degradation by the proteasome, thereby regulating the actin cytoskeleton and cell migration. Its interaction with RHOB may regulate apoptosis. May enhance the PCNA-dependent DNA polymerase delta activity. This Homo sapiens (Human) protein is BTB/POZ domain-containing adapter for CUL3-mediated RhoA degradation protein 2 (TNFAIP1).